The sequence spans 660 residues: MTITRHARIDWDEQGNPRSHDFSDVYFSTESGLDETRHVFLVQNDLRRRFTELPVGGRLIVGETGFGTGLNFLCAWQLFDECAPVDARLHFVSVEKYPLSQGDLQRALVLWPELSRFADQLLGQYVAIHEGFQRLVFDNGRVTLTLLIGDALQMLPQLDGQIDAWFLDGFAPAKNPDMWTPELFAELARLSTPSTTIGTFTSTGWVRRSLNAAGFKMKRVPGIGHKWEVLRGAFIAWPEGVTSVPAAKPWFARPTPLAGERKALAIGAGLAGCATAQSLAQRGWQVSLLERHAAPAQEASGNPQGVLYLKLSAHGTALSQLILSGFGHTRRQLERLQRGVEWDACGVLQLTFDDKEAQRQKQLAEAFPESLLHLLDRRAAEVQSGIALNSGGLFYPEGGWVHPPALCHAQIQHANIRLIAHHQALELRRVDDQWQVWSDAQLIDSAPVVVLAGAADIKQFSQSAELPLKRIRGQITSLPQTGASAALRTVVCAEGYVAPARLGEHTLGASFDFNSVDLTPNVADHLGNLTLLQEISADLASRLEAADRPPEQLRGRAAFRCTSPDYLPIVGPLADREAFVQAYAALGKDARQVPDIACPWLDGLYVNSGHGSRGLITAPLCAELIAAWLDNEPLPLPRSVAEACHPNRFALRGLIRGGGK.

The interval 1-235 is tRNA (mnm(5)s(2)U34)-methyltransferase; the sequence is MTITRHARID…KWEVLRGAFI (235 aa). The tract at residues 266 to 660 is FAD-dependent cmnm(5)s(2)U34 oxidoreductase; that stretch reads IGAGLAGCAT…LRGLIRGGGK (395 aa).

In the N-terminal section; belongs to the methyltransferase superfamily. tRNA (mnm(5)s(2)U34)-methyltransferase family. It in the C-terminal section; belongs to the DAO family. The cofactor is FAD.

The protein localises to the cytoplasm. The catalysed reaction is 5-aminomethyl-2-thiouridine(34) in tRNA + S-adenosyl-L-methionine = 5-methylaminomethyl-2-thiouridine(34) in tRNA + S-adenosyl-L-homocysteine + H(+). Its function is as follows. Catalyzes the last two steps in the biosynthesis of 5-methylaminomethyl-2-thiouridine (mnm(5)s(2)U) at the wobble position (U34) in tRNA. Catalyzes the FAD-dependent demodification of cmnm(5)s(2)U34 to nm(5)s(2)U34, followed by the transfer of a methyl group from S-adenosyl-L-methionine to nm(5)s(2)U34, to form mnm(5)s(2)U34. In Pseudomonas syringae pv. tomato (strain ATCC BAA-871 / DC3000), this protein is tRNA 5-methylaminomethyl-2-thiouridine biosynthesis bifunctional protein MnmC.